The sequence spans 204 residues: Probable GTP-binding protein EngB (204 aa).

The 176-residue stretch at 22-197 (GFPEIAFVGR…LAEFDNVLSI (176 aa)) folds into the EngB-type G domain. Residues 30-37 (GRSNVGKS), 57-61 (GKTRQ), 75-78 (DLPG), 144-147 (NKVD), and 176-178 (FSA) contribute to the GTP site. 2 residues coordinate Mg(2+): S37 and T59.

The protein belongs to the TRAFAC class TrmE-Era-EngA-EngB-Septin-like GTPase superfamily. EngB GTPase family. Requires Mg(2+) as cofactor.

Its function is as follows. Necessary for normal cell division and for the maintenance of normal septation. In Ruminiclostridium cellulolyticum (strain ATCC 35319 / DSM 5812 / JCM 6584 / H10) (Clostridium cellulolyticum), this protein is Probable GTP-binding protein EngB.